The primary structure comprises 246 residues: Neuromodulin (246 aa).

The disordered stretch occupies residues 1–246; it reads MLCCMRRTKQ…EESKADQENA (246 aa). Residues C3 and C4 are each lipidated (S-palmitoyl cysteine). Basic and acidic residues predominate over residues 9-33; sequence KQVEKNEDGDQKIEQDGIKPEDKAH. An IQ domain is found at 32-61; sequence AHKAATKIQASFRGHITRKKLKGEKKADAP. Low complexity-rich tracts occupy residues 87-99 and 125-157; these read ASAA…ADSA and SEQP…KAST. The segment covering 164-176 has biased composition (basic and acidic residues); the sequence is KADEAQDKEEPKQ. The segment covering 177–203 has biased composition (low complexity); sequence ADVPAADTTATTTPAAEDATAKATAQP. Basic and acidic residues-rich tracts occupy residues 213–225 and 237–246; these read TEEK…ETKP and EESKADQENA.

Belongs to the neuromodulin family. Binds calmodulin with a greater affinity in the absence of Ca(2+) than in its presence. Palmitoylated. Palmitoylation is essential for plasma membrane association. As to expression, expressed in neurons.

Its subcellular location is the cell membrane. It is found in the cell projection. The protein resides in the growth cone membrane. The protein localises to the synapse. It localises to the filopodium membrane. Its function is as follows. This protein is associated with nerve growth. It is a major component of the motile 'growth cones' that form the tips of elongating axons. Plays a role in axonal and dendritic filopodia induction. The chain is Neuromodulin (GAP43) from Gallus gallus (Chicken).